Here is a 396-residue protein sequence, read N- to C-terminus: NADH-ubiquinone oxidoreductase 49 kDa subunit (396 aa).

Belongs to the complex I 49 kDa subunit family.

It is found in the mitochondrion. The catalysed reaction is a ubiquinone + NADH + 5 H(+)(in) = a ubiquinol + NAD(+) + 4 H(+)(out). Functionally, core subunit of the mitochondrial membrane respiratory chain NADH dehydrogenase (Complex I) that is believed to belong to the minimal assembly required for catalysis. Complex I functions in the transfer of electrons from NADH to the respiratory chain. The immediate electron acceptor for the enzyme is believed to be ubiquinone. Component of the iron-sulfur (IP) fragment of the enzyme. Component of the iron-sulfur (IP) fragment of the enzyme. The sequence is that of NADH-ubiquinone oxidoreductase 49 kDa subunit (NAD7) from Reclinomonas americana.